The chain runs to 342 residues: Methylthioribose-1-phosphate isomerase (342 aa).

Residues 49 to 51 (RGA), arginine 86, and glutamine 187 contribute to the substrate site. The Proton donor role is filled by aspartate 228. 238–239 (NK) lines the substrate pocket.

It belongs to the eIF-2B alpha/beta/delta subunits family. MtnA subfamily.

It catalyses the reaction 5-(methylsulfanyl)-alpha-D-ribose 1-phosphate = 5-(methylsulfanyl)-D-ribulose 1-phosphate. It functions in the pathway amino-acid biosynthesis; L-methionine biosynthesis via salvage pathway; L-methionine from S-methyl-5-thio-alpha-D-ribose 1-phosphate: step 1/6. Catalyzes the interconversion of methylthioribose-1-phosphate (MTR-1-P) into methylthioribulose-1-phosphate (MTRu-1-P). The sequence is that of Methylthioribose-1-phosphate isomerase from Klebsiella pneumoniae (strain 342).